A 55-amino-acid polypeptide reads, in one-letter code: Chromatin protein Cren7 (55 aa).

This sequence belongs to the Cren7 family. In terms of assembly, monomer. Methylated at multiple sites, to varying extents.

It is found in the chromosome. The protein resides in the cytoplasm. Its function is as follows. A chromatin protein, binds double-stranded DNA without sequence specificity. Constrains negative DNA supercoils. The polypeptide is Chromatin protein Cren7 (Ignicoccus hospitalis (strain KIN4/I / DSM 18386 / JCM 14125)).